The following is a 372-amino-acid chain: tRNA-specific 2-thiouridylase MnmA (372 aa).

ATP is bound by residues 13–20 and M39; that span reads GMSGGVDS. An interaction with target base in tRNA region spans residues 99–101; it reads NPD. The active-site Nucleophile is C104. A disulfide bridge links C104 with C200. Position 128 (G128) interacts with ATP. The tract at residues 150-152 is interaction with tRNA; it reads KDQ. C200 functions as the Cysteine persulfide intermediate in the catalytic mechanism. Residues 310-311 are interaction with tRNA; sequence RY.

This sequence belongs to the MnmA/TRMU family.

The protein localises to the cytoplasm. It carries out the reaction S-sulfanyl-L-cysteinyl-[protein] + uridine(34) in tRNA + AH2 + ATP = 2-thiouridine(34) in tRNA + L-cysteinyl-[protein] + A + AMP + diphosphate + H(+). Functionally, catalyzes the 2-thiolation of uridine at the wobble position (U34) of tRNA, leading to the formation of s(2)U34. The polypeptide is tRNA-specific 2-thiouridylase MnmA (Bacillus pumilus (strain SAFR-032)).